Consider the following 437-residue polypeptide: GTPase Obg (437 aa).

Positions 2-160 constitute an Obg domain; that stretch reads SMFLDTAKIS…RQLELELKIL (159 aa). The OBG-type G domain maps to 161–338; sequence ADVGLVGFPS…LLEATAELLA (178 aa). GTP contacts are provided by residues 167-174, 192-196, 214-217, 284-287, and 319-321; these read GFPSVGKS, FTTIV, DLPG, NKMD, and SSL. Mg(2+) is bound by residues Ser-174 and Thr-194. Residues 359–437 enclose the OCT domain; that stretch reads GFAETEKDFE…IGKFEFEFVD (79 aa).

The protein belongs to the TRAFAC class OBG-HflX-like GTPase superfamily. OBG GTPase family. As to quaternary structure, monomer. Mg(2+) serves as cofactor.

The protein resides in the cytoplasm. Its function is as follows. An essential GTPase which binds GTP, GDP and possibly (p)ppGpp with moderate affinity, with high nucleotide exchange rates and a fairly low GTP hydrolysis rate. Plays a role in control of the cell cycle, stress response, ribosome biogenesis and in those bacteria that undergo differentiation, in morphogenesis control. The polypeptide is GTPase Obg (Streptococcus pyogenes serotype M4 (strain MGAS10750)).